The primary structure comprises 285 residues: Tropomyosin-2 (285 aa).

A coiled-coil region spans residues 1–277 (MDAIKKKMQA…KDIGDDLDTA (277 aa)). The tract at residues 103-133 (EERLATATAKLSEASQAADESERARKVLENR) is disordered. The segment covering 122–133 (ESERARKVLENR) has biased composition (basic and acidic residues).

Belongs to the tropomyosin family. Homodimer.

In terms of biological role, tropomyosin, in association with the troponin complex, plays a central role in the calcium dependent regulation of muscle contraction. The sequence is that of Tropomyosin-2 from Bombyx mori (Silk moth).